Here is a 292-residue protein sequence, read N- to C-terminus: tRNA (guanine-N(7)-)-methyltransferase (292 aa).

Residues 1–52 (MGKIEATSKEEKLRVQKEAEARRRAYRDLKKEARQMQKEVKFDTDDNSELPK) form a disordered region. Residues glycine 106, 129 to 130 (EI), 166 to 167 (NA), and cysteine 186 each bind S-adenosyl-L-methionine. Aspartate 189 is a catalytic residue. 264 to 266 (TEE) lines the S-adenosyl-L-methionine pocket.

It belongs to the class I-like SAM-binding methyltransferase superfamily. TrmB family. In terms of assembly, forms a complex with TRM82.

The protein localises to the nucleus. It catalyses the reaction guanosine(46) in tRNA + S-adenosyl-L-methionine = N(7)-methylguanosine(46) in tRNA + S-adenosyl-L-homocysteine. It participates in tRNA modification; N(7)-methylguanine-tRNA biosynthesis. Functionally, catalyzes the formation of N(7)-methylguanine at position 46 (m7G46) in tRNA. This is tRNA (guanine-N(7)-)-methyltransferase from Debaryomyces hansenii (strain ATCC 36239 / CBS 767 / BCRC 21394 / JCM 1990 / NBRC 0083 / IGC 2968) (Yeast).